The sequence spans 264 residues: MICOS complex subunit MIC27 (264 aa).

The N-terminal 27 residues, 1 to 27, are a transit peptide targeting the mitochondrion; the sequence is MAALRMGKLTTMPTGLIYASISVHVAK. Topologically, residues 28-110 are mitochondrial intermembrane; the sequence is EEESKKQLVK…YVYLKNPPRD (83 aa). The helical transmembrane segment at 111–129 threads the bilayer; the sequence is FLPKIGVITVSGLAGFISA. Residues 130 to 137 lie on the Mitochondrial matrix side of the membrane; that stretch reads RKGSRFKR. A helical membrane pass occupies residues 138–155; that stretch reads IAYPLGLATLGATVCYPV. Residues 156–264 lie on the Mitochondrial intermembrane side of the membrane; the sequence is QSVIIAKVAG…EDIDMYSTRS (109 aa). A compositionally biased stretch (basic and acidic residues) spans 189 to 198; the sequence is KLPEHKEKTK. A disordered region spans residues 189–264; it reads KLPEHKEKTK…EDIDMYSTRS (76 aa). The span at 223–238 shows a compositional bias: low complexity; that stretch reads AELSSETKTKSTSGAT. Residues 245–256 are compositionally biased toward basic and acidic residues; it reads KLMDHGQSHPED.

It belongs to the apolipoprotein O/MICOS complex subunit Mic27 family. As to quaternary structure, component of the mitochondrial contact site and cristae organizing system (MICOS) complex, composed of at least MICOS10/MIC10, CHCHD3/MIC19, CHCHD6/MIC25, APOOL/MIC27, IMMT/MIC60, APOO/MIC23/MIC26 and QIL1/MIC13. This complex was also known under the names MINOS or MitOS complex. The MICOS complex associates with mitochondrial outer membrane proteins SAMM50, MTX1 and MTX2 (together described as components of the mitochondrial outer membrane sorting assembly machinery (SAM) complex) and DNAJC11, mitochondrial inner membrane protein TMEM11 and with HSPA9. The MICOS and SAM complexes together with DNAJC11 are part of a large protein complex spanning both membranes termed the mitochondrial intermembrane space bridging (MIB) complex. Interacts with MICOS10/MIC10, IMMT/MIC60 and APOO/MIC23/MIC26.

It is found in the mitochondrion inner membrane. Its subcellular location is the mitochondrion. In terms of biological role, component of the MICOS complex, a large protein complex of the mitochondrial inner membrane that plays crucial roles in the maintenance of crista junctions, inner membrane architecture, and formation of contact sites to the outer membrane. Specifically binds to cardiolipin (in vitro) but not to the precursor lipid phosphatidylglycerol. Plays a crucial role in crista junction formation and mitochondrial function. The sequence is that of MICOS complex subunit MIC27 (APOL) from Bos taurus (Bovine).